We begin with the raw amino-acid sequence, 519 residues long: Probable cytochrome P450 513D1 (519 aa).

A helical membrane pass occupies residues 1–21; that stretch reads MGISSIIIILFIIVLLKKLIK. Cys-464 is a binding site for heme.

It belongs to the cytochrome P450 family. Requires heme as cofactor.

It localises to the membrane. The protein is Probable cytochrome P450 513D1 (cyp513D1) of Dictyostelium discoideum (Social amoeba).